The following is a 167-amino-acid chain: Ribosome maturation factor RimM (167 aa).

The PRC barrel domain maps to 94–165 (ENEYYYSDII…KIIITPMEGL (72 aa)).

Belongs to the RimM family. As to quaternary structure, binds ribosomal protein uS19.

The protein localises to the cytoplasm. An accessory protein needed during the final step in the assembly of 30S ribosomal subunit, possibly for assembly of the head region. Essential for efficient processing of 16S rRNA. May be needed both before and after RbfA during the maturation of 16S rRNA. It has affinity for free ribosomal 30S subunits but not for 70S ribosomes. The protein is Ribosome maturation factor RimM of Staphylococcus aureus (strain bovine RF122 / ET3-1).